The chain runs to 480 residues: Pyruvate kinase (480 aa).

Arginine 36 lines the substrate pocket. Residues asparagine 38, serine 40, and aspartate 70 each coordinate K(+). 38 to 41 (NFSH) contacts ATP. Residues arginine 77 and lysine 160 each coordinate ATP. A Mg(2+)-binding site is contributed by glutamate 225. Residues glycine 251, aspartate 252, and threonine 284 each coordinate substrate. Residue aspartate 252 participates in Mg(2+) binding.

It belongs to the pyruvate kinase family. As to quaternary structure, homotetramer. Mg(2+) is required as a cofactor. K(+) serves as cofactor.

The enzyme catalyses pyruvate + ATP = phosphoenolpyruvate + ADP + H(+). The protein operates within carbohydrate degradation; glycolysis; pyruvate from D-glyceraldehyde 3-phosphate: step 5/5. With respect to regulation, allosterically activated by AMP and by several sugar phosphates. Belongs to type II PK. This is Pyruvate kinase (pykA) from Buchnera aphidicola subsp. Acyrthosiphon pisum (strain APS) (Acyrthosiphon pisum symbiotic bacterium).